The following is a 105-amino-acid chain: Wound-induced protein 1 (105 aa).

To potato anionic peroxidase. Ubiquitous.

The sequence is that of Wound-induced protein 1 (WUN1) from Solanum tuberosum (Potato).